Reading from the N-terminus, the 159-residue chain is SsrA-binding protein (159 aa).

The protein belongs to the SmpB family.

The protein resides in the cytoplasm. In terms of biological role, required for rescue of stalled ribosomes mediated by trans-translation. Binds to transfer-messenger RNA (tmRNA), required for stable association of tmRNA with ribosomes. tmRNA and SmpB together mimic tRNA shape, replacing the anticodon stem-loop with SmpB. tmRNA is encoded by the ssrA gene; the 2 termini fold to resemble tRNA(Ala) and it encodes a 'tag peptide', a short internal open reading frame. During trans-translation Ala-aminoacylated tmRNA acts like a tRNA, entering the A-site of stalled ribosomes, displacing the stalled mRNA. The ribosome then switches to translate the ORF on the tmRNA; the nascent peptide is terminated with the 'tag peptide' encoded by the tmRNA and targeted for degradation. The ribosome is freed to recommence translation, which seems to be the essential function of trans-translation. In Coxiella burnetii (strain CbuK_Q154) (Coxiella burnetii (strain Q154)), this protein is SsrA-binding protein.